The chain runs to 707 residues: MDFYREEDYGLYALTILAQYHNIAVNPEELKHKFDLEGKGLDLTAWLLAAKSLELKAKQVKKAIDRLAFIALPALVWREDGKHFILTKIDNEAKKYLIFDLETHNPRILEQAEFESLYQGKLILVASRASIVGKLAKFDFTWFIPAVIKYRKIFIETLIVSIFLQIFALITPLFFQVVMDKVLVHRGFSTLNVITVALAIVVLFEIVLNGLRTYIFAHSTSRIDVELGARLFRHLLALPISYFENRRVGDTVARVRELDQIRNFLTGQALTSVLDLMFSFIFFAVMWYYSPKLTLVILGSLPFYMGWSIFISPILRRRLDEKFARGADNQSFLVESVTAINTIKALAVTPQMTNTWDKQLASYVSAGFRVTTLATIGQQGVQFIQKVVMVITLWLGAHLVISGDLSIGQLIAFNMLSGQVIAPVIRLAQLWQDFQQVGISVTRLGDVLNSPTESYQGKLALPEIKGDITFRNIRFRYKPDAPVILNDVNLSIQQGEVIGIVGRSGSGKSTLTKLIQRFYIPENGQVLIDGHDLALADPNWLRRQVGVVLQDNVLLNRSIRDNIALADPGMPMEKIVHAAKLAGAHEFISELREGYNTIVGEQGAGLSGGQRQRIAIARALVNNPKILIFDEATSALDYESEHIIMRNMHQICKGRTVIIIAHRLSTVKNADRIIVMEKGQIVEQGKHKELLADPNGLYHYLHQLQSE.

The 125-residue stretch at 1–125 folds into the Peptidase C39 domain; the sequence is MDFYREEDYG…SLYQGKLILV (125 aa). H83 is an active-site residue. The region spanning 154–436 is the ABC transmembrane type-1 domain; it reads FIETLIVSIF…LAQLWQDFQQ (283 aa). Transmembrane regions (helical) follow at residues 158–178, 188–208, 295–315, 387–407, and 410–430; these read LIVSIFLQIFALITPLFFQVV, FSTLNVITVALAIVVLFEIVL, LVILGSLPFYMGWSIFISPIL, VVMVITLWLGAHLVISGDLSI, and LIAFNMLSGQVIAPVIRLAQL. The ABC transporter domain occupies 468 to 703; that stretch reads ITFRNIRFRY…PNGLYHYLHQ (236 aa). 502-509 provides a ligand contact to ATP; the sequence is GRSGSGKS.

It belongs to the ABC transporter superfamily. Protein-1 exporter (TC 3.A.1.109) family. Homodimer.

It is found in the cell membrane. Involved in the transport of the toxin RTX-I as well as that of RTX-II. In Actinobacillus pleuropneumoniae (Haemophilus pleuropneumoniae), this protein is Toxin RTX-I translocation ATP-binding protein (apxIB).